A 390-amino-acid chain; its full sequence is Chorismate synthase 2 (390 aa).

NADP(+)-binding residues include Arg39 and Arg45. FMN is bound by residues 132-134, 253-254, Gly298, 313-317, and Arg339; these read RSS, NA, and KPIPT.

This sequence belongs to the chorismate synthase family. As to quaternary structure, homotetramer. FMNH2 is required as a cofactor.

The catalysed reaction is 5-O-(1-carboxyvinyl)-3-phosphoshikimate = chorismate + phosphate. The protein operates within metabolic intermediate biosynthesis; chorismate biosynthesis; chorismate from D-erythrose 4-phosphate and phosphoenolpyruvate: step 7/7. Functionally, catalyzes the anti-1,4-elimination of the C-3 phosphate and the C-6 proR hydrogen from 5-enolpyruvylshikimate-3-phosphate (EPSP) to yield chorismate, which is the branch point compound that serves as the starting substrate for the three terminal pathways of aromatic amino acid biosynthesis. This reaction introduces a second double bond into the aromatic ring system. The protein is Chorismate synthase 2 of Bacillus thuringiensis (strain Al Hakam).